The following is a 273-amino-acid chain: NH(3)-dependent NAD(+) synthetase (273 aa).

47 to 54 (GISGGQDS) serves as a coordination point for ATP. Aspartate 53 serves as a coordination point for Mg(2+). A deamido-NAD(+)-binding site is contributed by arginine 139. An ATP-binding site is contributed by threonine 159. A Mg(2+)-binding site is contributed by glutamate 164. The deamido-NAD(+) site is built by lysine 172 and aspartate 179. The ATP site is built by lysine 188 and threonine 210. A deamido-NAD(+)-binding site is contributed by 259 to 260 (HK).

The protein belongs to the NAD synthetase family. As to quaternary structure, homodimer.

It catalyses the reaction deamido-NAD(+) + NH4(+) + ATP = AMP + diphosphate + NAD(+) + H(+). Its pathway is cofactor biosynthesis; NAD(+) biosynthesis; NAD(+) from deamido-NAD(+) (ammonia route): step 1/1. In terms of biological role, catalyzes the ATP-dependent amidation of deamido-NAD to form NAD. Uses ammonia as a nitrogen source. The protein is NH(3)-dependent NAD(+) synthetase of Staphylococcus aureus (strain bovine RF122 / ET3-1).